A 123-amino-acid chain; its full sequence is WAP four-disulfide core domain protein 5 (123 aa).

The N-terminal stretch at 1–24 (MRFWSLFLLVVLLAVGGQLPAASG) is a signal peptide. 2 WAP domains span residues 27-74 (KGER…VPRI) and 75-121 (LVKR…RDPA). Disulfide bonds link Cys34–Cys62, Cys41–Cys66, Cys49–Cys61, Cys55–Cys70, Cys81–Cys109, Cys88–Cys113, Cys96–Cys108, and Cys102–Cys117.

It is found in the secreted. In terms of biological role, putative acid-stable proteinase inhibitor. This Lemur catta (Ring-tailed lemur) protein is WAP four-disulfide core domain protein 5 (WFDC5).